The following is a 373-amino-acid chain: Secondary metabolism regulator laeA (373 aa).

Disordered stretches follow at residues 1–21 and 53–81; these read MFLNGQGGQRPPTVASPPLNV and AAERDPAAGRWHANGSPSINSTSSKNPDR. Residues 67–77 show a composition bias toward polar residues; that stretch reads GSPSINSTSSK.

It belongs to the methyltransferase superfamily. LaeA methyltransferase family. As to quaternary structure, component of the heterotrimeric velvet complex composed of laeA, veA and velB; VeA acting as a bridging protein between laeA and velB.

It is found in the nucleus. It catalyses the reaction L-methionyl-[protein] + S-adenosyl-L-methionine = S-methyl-L-methionyl-[protein] + S-adenosyl-L-homocysteine. Functionally, methyltransferase that performs automethylation. No other methyl-accepting substrate has been identified yet. Component of the velvet transcription factor complex that acts as a global regulator for secondary metabolite gene expression. Controls the expression of the cyclopiazonic acid (CPA) gene clusters. Regulates also pigmentation and conidial head morphology. The chain is Secondary metabolism regulator laeA from Aspergillus fumisynnematus.